A 469-amino-acid chain; its full sequence is Calcium-binding mitochondrial carrier protein SCaMC-2 (469 aa).

Residues 1–189 are Mitochondrial intermembrane-facing; that stretch reads MLCLCLYVPL…ERQTGMWWRH (189 aa). EF-hand domains lie at 47–80, 78–113, and 114–149; these read TYRQ…QDHE, DHEK…LGVK, and ISEQ…HPVE. Positions 60, 62, 64, 66, and 71 each coordinate Ca(2+). 3 Solcar repeats span residues 184-270, 278-363, and 375-463; these read GMWW…IKRL, LRIH…LKNA, and PGVF…LKIT. Residues 190–207 form a helical membrane-spanning segment; sequence LVAGGGAGAVSRTCTAPL. Over 208-244 the chain is Mitochondrial matrix; the sequence is DRLKVLMQVHASRSNNMCIVGGFTQMIREGGARSLWR. The chain crosses the membrane as a helical span at residues 245 to 264; it reads GNGINVLKIAPESAIKFMAY. The Mitochondrial intermembrane segment spans residues 265–287; it reads EQIKRLIGSDQETLRIHERLVAG. The chain crosses the membrane as a helical span at residues 288–301; that stretch reads SLAGAIAQSSIYPM. Over 302–337 the chain is Mitochondrial matrix; sequence EVLKTRMALRKTGQYSGMLDCARKILAREGMAAFYK. The helical transmembrane segment at 338–357 threads the bilayer; it reads GYVPNMLGIIPYAGIDLAVY. At 358–380 the chain is on the mitochondrial intermembrane side; sequence ETLKNAWLQRYAVNSADPGVFVL. A helical transmembrane segment spans residues 381 to 398; it reads LACGTMSSTCGQLASYPL. Over 399 to 437 the chain is Mitochondrial matrix; that stretch reads ALVRTRMQAQASMEGAPEVTMSSLFKQILRTEGAFGLYR. Residues 438 to 457 form a helical membrane-spanning segment; it reads GLAPNFMKVIPAVSISYVVY. At 458-469 the chain is on the mitochondrial intermembrane side; that stretch reads ENLKITLGVQSR.

This sequence belongs to the mitochondrial carrier (TC 2.A.29) family.

The protein localises to the mitochondrion inner membrane. Its function is as follows. Calcium-dependent mitochondrial solute carrier. Mitochondrial solute carriers shuttle metabolites, nucleotides, and cofactors through the mitochondrial inner membrane. May act as a ATP-Mg/Pi exchanger that mediates the transport of Mg-ATP in exchange for phosphate, catalyzing the net uptake or efflux of adenine nucleotides into or from the mitochondria. The polypeptide is Calcium-binding mitochondrial carrier protein SCaMC-2 (SLC25A25) (Bos taurus (Bovine)).